Consider the following 265-residue polypeptide: Thymidylate synthase (265 aa).

Arg21 is a dUMP binding site. His51 contacts (6R)-5,10-methylene-5,6,7,8-tetrahydrofolate. Residue 127–128 participates in dUMP binding; sequence RR. Cys147 functions as the Nucleophile in the catalytic mechanism. DUMP-binding positions include 167 to 170, Asn178, and 208 to 210; these read RSAD and HLY. Asp170 lines the (6R)-5,10-methylene-5,6,7,8-tetrahydrofolate pocket. Ser264 contacts (6R)-5,10-methylene-5,6,7,8-tetrahydrofolate.

The protein belongs to the thymidylate synthase family. Bacterial-type ThyA subfamily. As to quaternary structure, homodimer.

The protein resides in the cytoplasm. The enzyme catalyses dUMP + (6R)-5,10-methylene-5,6,7,8-tetrahydrofolate = 7,8-dihydrofolate + dTMP. Its pathway is pyrimidine metabolism; dTTP biosynthesis. Its function is as follows. Catalyzes the reductive methylation of 2'-deoxyuridine-5'-monophosphate (dUMP) to 2'-deoxythymidine-5'-monophosphate (dTMP) while utilizing 5,10-methylenetetrahydrofolate (mTHF) as the methyl donor and reductant in the reaction, yielding dihydrofolate (DHF) as a by-product. This enzymatic reaction provides an intracellular de novo source of dTMP, an essential precursor for DNA biosynthesis. The polypeptide is Thymidylate synthase (Neisseria gonorrhoeae).